The sequence spans 201 residues: Potassium-transporting ATPase KdpC subunit (201 aa).

A helical transmembrane segment spans residues 7-27 (PALVLLVALTAITGLAYPLAV).

The protein belongs to the KdpC family. As to quaternary structure, the system is composed of three essential subunits: KdpA, KdpB and KdpC.

The protein localises to the cell inner membrane. Its function is as follows. Part of the high-affinity ATP-driven potassium transport (or Kdp) system, which catalyzes the hydrolysis of ATP coupled with the electrogenic transport of potassium into the cytoplasm. This subunit acts as a catalytic chaperone that increases the ATP-binding affinity of the ATP-hydrolyzing subunit KdpB by the formation of a transient KdpB/KdpC/ATP ternary complex. The polypeptide is Potassium-transporting ATPase KdpC subunit (Methylorubrum extorquens (strain CM4 / NCIMB 13688) (Methylobacterium extorquens)).